A 359-amino-acid chain; its full sequence is Histidinol-phosphate aminotransferase (359 aa).

Lys217 bears the N6-(pyridoxal phosphate)lysine mark.

It belongs to the class-II pyridoxal-phosphate-dependent aminotransferase family. Histidinol-phosphate aminotransferase subfamily. As to quaternary structure, homodimer. Pyridoxal 5'-phosphate serves as cofactor.

The enzyme catalyses L-histidinol phosphate + 2-oxoglutarate = 3-(imidazol-4-yl)-2-oxopropyl phosphate + L-glutamate. The protein operates within amino-acid biosynthesis; L-histidine biosynthesis; L-histidine from 5-phospho-alpha-D-ribose 1-diphosphate: step 7/9. The polypeptide is Histidinol-phosphate aminotransferase (Salmonella arizonae (strain ATCC BAA-731 / CDC346-86 / RSK2980)).